The primary structure comprises 192 residues: Cell division protein SepF (192 aa).

Positions 154–192 are disordered; the sequence is QEEPAPSNVTTTTQQSEETISESVTAPEPAWGTPVASAI. The segment covering 162–178 has biased composition (low complexity); the sequence is VTTTTQQSEETISESVT.

This sequence belongs to the SepF family. As to quaternary structure, homodimer. Interacts with FtsZ.

The protein resides in the cytoplasm. Cell division protein that is part of the divisome complex and is recruited early to the Z-ring. Probably stimulates Z-ring formation, perhaps through the cross-linking of FtsZ protofilaments. Its function overlaps with FtsA. This is Cell division protein SepF from Prochlorococcus marinus (strain MIT 9211).